Here is a 429-residue protein sequence, read N- to C-terminus: Glutamate-1-semialdehyde 2,1-aminomutase (429 aa).

Lys265 is modified (N6-(pyridoxal phosphate)lysine).

Belongs to the class-III pyridoxal-phosphate-dependent aminotransferase family. HemL subfamily. Homodimer. It depends on pyridoxal 5'-phosphate as a cofactor.

The protein resides in the cytoplasm. The catalysed reaction is (S)-4-amino-5-oxopentanoate = 5-aminolevulinate. It functions in the pathway porphyrin-containing compound metabolism; protoporphyrin-IX biosynthesis; 5-aminolevulinate from L-glutamyl-tRNA(Glu): step 2/2. The protein is Glutamate-1-semialdehyde 2,1-aminomutase of Ectopseudomonas mendocina (strain ymp) (Pseudomonas mendocina).